The following is a 337-amino-acid chain: Pantothenate synthetase (337 aa).

31–38 (MGALHEGH) is a binding site for ATP. The active-site Proton donor is the His-38. Gln-65 lines the (R)-pantoate pocket. Position 65 (Gln-65) interacts with beta-alanine. Position 152 to 155 (152 to 155 (GQKD)) interacts with ATP. Gln-158 contacts (R)-pantoate. ATP contacts are provided by residues Val-181 and 189–192 (LSSR).

The protein belongs to the pantothenate synthetase family. Homodimer.

It localises to the cytoplasm. It catalyses the reaction (R)-pantoate + beta-alanine + ATP = (R)-pantothenate + AMP + diphosphate + H(+). It functions in the pathway cofactor biosynthesis; (R)-pantothenate biosynthesis; (R)-pantothenate from (R)-pantoate and beta-alanine: step 1/1. Its function is as follows. Catalyzes the condensation of pantoate with beta-alanine in an ATP-dependent reaction via a pantoyl-adenylate intermediate. The chain is Pantothenate synthetase from Streptomyces coelicolor (strain ATCC BAA-471 / A3(2) / M145).